Consider the following 302-residue polypeptide: MNLQVEVGGLKLKNPVMTASGTFGFGREYGEYIDLNQLGAIVVKGLTVKPKEGNPPPRVYETPCGMLNSVGLQNSGVDAFIEKELPFLRDYDVAVIVNIAGETIEEFAYMAKKLDIDGVDGIEINVSCPNVKKGGMAFGINPEDIFNITKEVKKVTQKTVIVKLTPNVGDIGVCAKAAEDGGADAVSLINTIAGMAINIDTRTPVFKNVIAGLSGPAIKPIALRMVYEAARAVKIPVIGMGGISSFKDALEFMIAGAKAVAIGTCNFVNPNCTIEVIEGIKQYMVLNNIEDINEIIGSLKVD.

Residues serine 20 and 44–45 contribute to the FMN site; that span reads KG. Substrate-binding positions include lysine 44 and 68–72; that span reads NSVGL. FMN contacts are provided by asparagine 98 and asparagine 125. Asparagine 125 provides a ligand contact to substrate. The active-site Nucleophile is the cysteine 128. Residues lysine 163 and isoleucine 189 each coordinate FMN. 190–191 serves as a coordination point for substrate; it reads NT. Residues glycine 215, 241 to 242, and 263 to 264 each bind FMN; these read GG and GT.

The protein belongs to the dihydroorotate dehydrogenase family. Type 1 subfamily. As to quaternary structure, heterotetramer of 2 PyrK and 2 PyrD type B subunits. FMN is required as a cofactor.

The protein resides in the cytoplasm. It catalyses the reaction (S)-dihydroorotate + NAD(+) = orotate + NADH + H(+). The protein operates within pyrimidine metabolism; UMP biosynthesis via de novo pathway; orotate from (S)-dihydroorotate (NAD(+) route): step 1/1. Functionally, catalyzes the conversion of dihydroorotate to orotate with NAD(+) as electron acceptor. The protein is Dihydroorotate dehydrogenase B (NAD(+)), catalytic subunit (pyrD) of Thermoanaerobacter sp. (strain X514).